The following is a 410-amino-acid chain: Imidazolonepropionase (410 aa).

Fe(3+) contacts are provided by H73 and H75. Positions 73 and 75 each coordinate Zn(2+). R82, Y145, and H178 together coordinate 4-imidazolone-5-propanoate. Y145 contributes to the N-formimidoyl-L-glutamate binding site. H243 is a Fe(3+) binding site. H243 provides a ligand contact to Zn(2+). Position 246 (Q246) interacts with 4-imidazolone-5-propanoate. D318 contributes to the Fe(3+) binding site. Zn(2+) is bound at residue D318. N-formimidoyl-L-glutamate-binding residues include N320 and G322. S323 contacts 4-imidazolone-5-propanoate.

It belongs to the metallo-dependent hydrolases superfamily. HutI family. Zn(2+) serves as cofactor. Fe(3+) is required as a cofactor.

The protein localises to the cytoplasm. The enzyme catalyses 4-imidazolone-5-propanoate + H2O = N-formimidoyl-L-glutamate. Its pathway is amino-acid degradation; L-histidine degradation into L-glutamate; N-formimidoyl-L-glutamate from L-histidine: step 3/3. Its function is as follows. Catalyzes the hydrolytic cleavage of the carbon-nitrogen bond in imidazolone-5-propanoate to yield N-formimidoyl-L-glutamate. It is the third step in the universal histidine degradation pathway. The chain is Imidazolonepropionase from Shewanella frigidimarina (strain NCIMB 400).